A 173-amino-acid polypeptide reads, in one-letter code: Large ribosomal subunit protein bL9 (173 aa).

This sequence belongs to the bacterial ribosomal protein bL9 family.

Binds to the 23S rRNA. In Rickettsia bellii (strain RML369-C), this protein is Large ribosomal subunit protein bL9.